We begin with the raw amino-acid sequence, 281 residues long: Ribosomal RNA small subunit methyltransferase A (281 aa).

The S-adenosyl-L-methionine site is built by N36, L38, G63, E84, D109, and N127.

Belongs to the class I-like SAM-binding methyltransferase superfamily. rRNA adenine N(6)-methyltransferase family. RsmA subfamily.

The protein localises to the cytoplasm. The catalysed reaction is adenosine(1518)/adenosine(1519) in 16S rRNA + 4 S-adenosyl-L-methionine = N(6)-dimethyladenosine(1518)/N(6)-dimethyladenosine(1519) in 16S rRNA + 4 S-adenosyl-L-homocysteine + 4 H(+). Functionally, specifically dimethylates two adjacent adenosines (A1518 and A1519) in the loop of a conserved hairpin near the 3'-end of 16S rRNA in the 30S particle. May play a critical role in biogenesis of 30S subunits. This chain is Ribosomal RNA small subunit methyltransferase A, found in Borrelia garinii subsp. bavariensis (strain ATCC BAA-2496 / DSM 23469 / PBi) (Borreliella bavariensis).